A 195-amino-acid polypeptide reads, in one-letter code: MYIVLEGIDGVGKTTQTEKLKEWLEKRGFSVKTIVEPTDSDIGKIIREELLKPEATSDTNQQMLALLFAADRLTLKDEINQVKNNQQKILISDRSFYSSITYQNSTTIEPEWIYKINKHTPRPDLTIILDIDEDEALKRCDKIDTFENKEFLEKTRENYLKLVKTEKNIVKIDATPTEDVVQDEIRNQIIKYLKL.

Residue 7 to 14 (GIDGVGKT) coordinates ATP.

The protein belongs to the thymidylate kinase family.

The enzyme catalyses dTMP + ATP = dTDP + ADP. This is Probable thymidylate kinase from Methanosphaera stadtmanae (strain ATCC 43021 / DSM 3091 / JCM 11832 / MCB-3).